The primary structure comprises 393 residues: Nucleoside permease NupC (393 aa).

A run of 9 helical transmembrane segments spans residues tyrosine 3–glycine 23, isoleucine 32–glycine 52, threonine 87–leucine 107, leucine 168–leucine 188, glutamate 191–isoleucine 211, valine 249–phenylalanine 269, valine 272–valine 292, alanine 334–glycine 354, and leucine 372–isoleucine 392.

The protein belongs to the concentrative nucleoside transporter (CNT) (TC 2.A.41) family.

Its subcellular location is the cell membrane. Transport of the pyrimidine nucleoside uridine. This chain is Nucleoside permease NupC, found in Bacillus subtilis (strain 168).